The following is a 438-amino-acid chain: Histidine--tRNA ligase (438 aa).

This sequence belongs to the class-II aminoacyl-tRNA synthetase family. Homodimer.

The protein localises to the cytoplasm. It carries out the reaction tRNA(His) + L-histidine + ATP = L-histidyl-tRNA(His) + AMP + diphosphate + H(+). This Blochmanniella pennsylvanica (strain BPEN) protein is Histidine--tRNA ligase.